Here is a 187-residue protein sequence, read N- to C-terminus: Threonylcarbamoyl-AMP synthase (187 aa).

In terms of domain architecture, YrdC-like spans 3–187 (NSELLKIIWA…LLNGYLYRKR (185 aa)).

The protein belongs to the SUA5 family. TsaC subfamily.

Its subcellular location is the cytoplasm. The enzyme catalyses L-threonine + hydrogencarbonate + ATP = L-threonylcarbamoyladenylate + diphosphate + H2O. Required for the formation of a threonylcarbamoyl group on adenosine at position 37 (t(6)A37) in tRNAs that read codons beginning with adenine. Catalyzes the conversion of L-threonine, HCO(3)(-)/CO(2) and ATP to give threonylcarbamoyl-AMP (TC-AMP) as the acyladenylate intermediate, with the release of diphosphate. The protein is Threonylcarbamoyl-AMP synthase of Riesia pediculicola (strain USDA).